The chain runs to 467 residues: A-type ATP synthase subunit B (467 aa).

A disordered region spans residues 95 to 114 (GKGQPRDHMPLPPPEDFRDV).

This sequence belongs to the ATPase alpha/beta chains family. In terms of assembly, has multiple subunits with at least A(3), B(3), C, D, E, F, H, I and proteolipid K(x).

Its subcellular location is the cell membrane. Component of the A-type ATP synthase that produces ATP from ADP in the presence of a proton gradient across the membrane. The B chain is a regulatory subunit. The sequence is that of A-type ATP synthase subunit B from Pyrobaculum aerophilum (strain ATCC 51768 / DSM 7523 / JCM 9630 / CIP 104966 / NBRC 100827 / IM2).